The following is an 80-amino-acid chain: Putative membrane protein insertion efficiency factor (80 aa).

This sequence belongs to the UPF0161 family.

It is found in the cell membrane. In terms of biological role, could be involved in insertion of integral membrane proteins into the membrane. The polypeptide is Putative membrane protein insertion efficiency factor (Corynebacterium jeikeium (strain K411)).